Reading from the N-terminus, the 75-residue chain is MPIVSKYTNQQFDDLMNDLITVLEKHKAPVDLSLMVLGNVTTNIINGMAPAQRQAITEKYVQALTSSVDTRHDTH.

This sequence belongs to the UPF0352 family.

This is UPF0352 protein ASA_2693 from Aeromonas salmonicida (strain A449).